The primary structure comprises 236 residues: Ureidoacrylate amidohydrolase RutB (236 aa).

D24 acts as the Proton acceptor in catalysis. K133 is a catalytic residue. Residue C166 is the Nucleophile of the active site.

This sequence belongs to the isochorismatase family. RutB subfamily.

It carries out the reaction (Z)-3-ureidoacrylate + H2O + H(+) = (Z)-3-aminoacrylate + NH4(+) + CO2. It catalyses the reaction (Z)-3-ureidoacrylate + H2O = (Z)-3-aminoacrylate + carbamate + H(+). The enzyme catalyses (Z)-2-methylureidoacrylate + H2O + H(+) = (Z)-2-methylaminoacrylate + NH4(+) + CO2. Hydrolyzes ureidoacrylate to form aminoacrylate and carbamate. The carbamate hydrolyzes spontaneously, thereby releasing one of the nitrogen atoms of the pyrimidine ring as ammonia and one of its carbon atoms as CO2. In Klebsiella pneumoniae subsp. pneumoniae (strain ATCC 700721 / MGH 78578), this protein is Ureidoacrylate amidohydrolase RutB.